Reading from the N-terminus, the 340-residue chain is 4-dimethylallyltryptophan N-methyltransferase ifgB (340 aa).

Belongs to the methyltransferase superfamily. As to quaternary structure, homodimer.

The catalysed reaction is 4-(3-methylbut-2-enyl)-L-tryptophan + S-adenosyl-L-methionine = 4-(3-methylbut-2-enyl)-L-abrine + S-adenosyl-L-homocysteine + H(+). The protein operates within alkaloid biosynthesis; ergot alkaloid biosynthesis. Its function is as follows. 4-dimethylallyltryptophan N-methyltransferase; part of the gene cluster that mediates the biosynthesis of isofumigaclavines, fungal ergot alkaloids. The tryptophan dimethylallyltransferase ifgA catalyzes the first step of ergot alkaloid biosynthesis by condensing dimethylallyl diphosphate (DMAP) and tryptophan to form 4-dimethylallyl-L-tryptophan. The second step is catalyzed by the methyltransferase ifgB that methylates 4-dimethylallyl-L-tryptophan in the presence of S-adenosyl-L-methionine, resulting in the formation of N-methyl-dimethylallyl-L-tryptophan. The catalase ifgD and the FAD-dependent oxidoreductase ifgC then transform N-methyl-dimethylallyl-L-tryptophan to chanoclavine-I which is further oxidized by ifgE in the presence of NAD(+), resulting in the formation of chanoclavine-I aldehyde. The chanoclavine-I aldehyde reductases ifgG and/or fgaOx3 reduce chanoclavine-I aldehyde to dihydrochanoclavine-I aldehyde that spontaneously dehydrates to form 6,8-dimethyl-6,7-didehydroergoline. The festuclavine dehydrogenases ifgF1 and/or ifgF2 then catalyze the reduction of 6,8-dimethyl-6,7-didehydroergoline to form festuclavine. Hydrolysis of festuclavine by a yet undetermined cytochrome P450 monooxygenase (called ifgH) then leads to the formation of isofumigaclavine B which is in turn acetylated by ifgI to isofumigaclavine A. Penicillium roqueforti has interestingly at least two sets of genes for the consumption of chanoclavine-I aldehyde on three different loci, the OYEs ifgG/fgaOx3 and the festuclavine synthase homologs ifgF1/ifgF2. The reason for the duplication of these genes is unclear, probably to ensure the conversion of chanoclavine-I aldehyde by differential gene expression under various environmental conditions. This chain is 4-dimethylallyltryptophan N-methyltransferase ifgB, found in Penicillium roqueforti (strain FM164).